The chain runs to 336 residues: Toluate 1,2-dioxygenase electron transfer component (336 aa).

The region spanning 3 to 97 (HKVATDFEDG…DCVIRVPAAS (95 aa)) is the 2Fe-2S ferredoxin-type domain. Positions 40, 45, 48, and 81 each coordinate [2Fe-2S] cluster. The interval 99-336 (VCKTQQAGYQ…FYYEKFAASA (238 aa)) is ferredoxin-reductase. Residues 104 to 204 (QAGYQAAISN…AGPLGAFYLR (101 aa)) enclose the FAD-binding FR-type domain.

It belongs to the bacterial ring-hydroxylating dioxygenase ferredoxin reductase family. This dioxygenase system consists of three proteins: the two subunits of the hydroxylase component (XylX and XylY), and an electron transfer component (XylZ). It depends on FAD as a cofactor. The cofactor is [2Fe-2S] cluster.

The catalysed reaction is 2 reduced [2Fe-2S]-[ferredoxin] + NAD(+) + H(+) = 2 oxidized [2Fe-2S]-[ferredoxin] + NADH. Its function is as follows. Electron transfer component of toluate 1,2-dioxygenase system. This chain is Toluate 1,2-dioxygenase electron transfer component (xylZ), found in Pseudomonas putida (Arthrobacter siderocapsulatus).